A 313-amino-acid chain; its full sequence is HPr kinase/phosphorylase (313 aa).

Catalysis depends on residues His-141 and Lys-162. ATP is bound at residue 156-163; the sequence is GKSGIGKS. Mg(2+) is bound at residue Ser-163. Residue Asp-180 is the Proton acceptor; for phosphorylation activity. Proton donor; for dephosphorylation activity of the active site. The tract at residues 203–212 is important for the catalytic mechanism of both phosphorylation and dephosphorylation; it reads IEIRGIGIFD. Position 204 (Glu-204) interacts with Mg(2+). Arg-247 is a catalytic residue. The segment at 268 to 273 is important for the catalytic mechanism of dephosphorylation; that stretch reads PVSAGR.

Belongs to the HPrK/P family. In terms of assembly, homohexamer. It depends on Mg(2+) as a cofactor.

It carries out the reaction [HPr protein]-L-serine + ATP = [HPr protein]-O-phospho-L-serine + ADP + H(+). The catalysed reaction is [HPr protein]-O-phospho-L-serine + phosphate + H(+) = [HPr protein]-L-serine + diphosphate. In terms of biological role, catalyzes the ATP- as well as the pyrophosphate-dependent phosphorylation of a specific serine residue in HPr, a phosphocarrier protein of the phosphoenolpyruvate-dependent sugar phosphotransferase system (PTS). HprK/P also catalyzes the pyrophosphate-producing, inorganic phosphate-dependent dephosphorylation (phosphorolysis) of seryl-phosphorylated HPr (P-Ser-HPr). The two antagonistic activities of HprK/P are regulated by several intracellular metabolites, which change their concentration in response to the absence or presence of rapidly metabolisable carbon sources (glucose, fructose, etc.) in the growth medium. Therefore, by controlling the phosphorylation state of HPr, HPrK/P is a sensor enzyme that plays a major role in the regulation of carbon metabolism and sugar transport: it mediates carbon catabolite repression (CCR), and regulates PTS-catalyzed carbohydrate uptake and inducer exclusion. The polypeptide is HPr kinase/phosphorylase (Mycoplasma mycoides subsp. mycoides SC (strain CCUG 32753 / NCTC 10114 / PG1)).